We begin with the raw amino-acid sequence, 210 residues long: 2-Cys peroxiredoxin BAS1, chloroplastic (210 aa).

Residues 1–10 constitute a chloroplast transit peptide; the sequence is DARARSFVAR. The Thioredoxin domain maps to 18–177; it reads PLVGNKAPDF…TLRTLQALQY (160 aa). Cys-64 functions as the Cysteine sulfenic acid (-SOH) intermediate in the catalytic mechanism.

The protein belongs to the peroxiredoxin family. AhpC/Prx1 subfamily. Homodimer; disulfide-linked, upon oxidation. In terms of tissue distribution, expressed in leaf blade, sheath, basiplast, stem and green spike. Maximal expression in young developing shoots segments where cell division and elongation take place. Not expressed in roots.

Its subcellular location is the plastid. The protein localises to the chloroplast. The enzyme catalyses a hydroperoxide + [thioredoxin]-dithiol = an alcohol + [thioredoxin]-disulfide + H2O. Functionally, thiol-specific peroxidase that catalyzes the reduction of hydrogen peroxide and organic hydroperoxides to water and alcohols, respectively. Plays a role in cell protection against oxidative stress by detoxifying peroxides. May be an antioxidant enzyme particularly in the developing shoot and photosynthesizing leaf. This is 2-Cys peroxiredoxin BAS1, chloroplastic (BAS1) from Hordeum vulgare (Barley).